The following is a 351-amino-acid chain: Nitronate monooxygenase (351 aa).

FMN-binding positions include leucine 21, asparagine 69, glutamine 176, glycine 181, glycine 218, and 237 to 240 (QMGT).

This sequence belongs to the nitronate monooxygenase family. NMO class I subfamily. FMN is required as a cofactor.

It carries out the reaction 3 propionate 3-nitronate + 3 O2 + H2O = 3 3-oxopropanoate + 2 nitrate + nitrite + H2O2 + 3 H(+). Nitronate monooxygenase that uses molecular oxygen to catalyze the oxidative denitrification of alkyl nitronates. The toxin propionate 3-nitronate (P3N) is the best substrate (and the presumed physiological substrate), but this enzyme is also active on other primary and secondary nitronates such as propyl-1-nitronate, ethylnitronate, pentyl-1-nitronate, butyl-1-nitronate and propyl-2-nitronate. Is likely involved in the degradation of P3N, that allows P.aeruginosa PAO1 to grow on 3-nitropropionate/P3N as the sole nitrogen source. Also functions in the detoxification of P3N, a metabolic poison produced by plants and fungi as a defense mechanism. Cannot oxidize nitroalkanes such as 3-nitropropionate, nitroethane, 1-nitropropane, 1-nitrobutane, 1-nitropentane, or 2-nitropropane. This chain is Nitronate monooxygenase, found in Pseudomonas aeruginosa (strain ATCC 15692 / DSM 22644 / CIP 104116 / JCM 14847 / LMG 12228 / 1C / PRS 101 / PAO1).